Here is a 661-residue protein sequence, read N- to C-terminus: FAST kinase domain-containing protein 3, mitochondrial (661 aa).

Residues Val592 to Arg650 form the RAP domain.

It belongs to the FAST kinase family. As to expression, expression detected in spleen, testis, colon, heart, smooth muscle, kidney, brain, lung, liver, brown and white adipose tissue with highest expression in testis and smooth muscle.

It is found in the mitochondrion. In terms of biological role, required for normal mitochondrial respiration. Increases steady-state levels and half-lives of a subset of mature mitochondrial mRNAs MT-ND2, MT-ND3, MT-CYTB, MT-CO2, and MT-ATP8/6. Promotes MT-CO1 mRNA translation and increases mitochondrial complex IV assembly and activity. The sequence is that of FAST kinase domain-containing protein 3, mitochondrial (Fastkd3) from Mus musculus (Mouse).